Here is a 392-residue protein sequence, read N- to C-terminus: Obg-like ATPase 1 (392 aa).

One can recognise an OBG-type G domain in the interval 21-285 (LKTGIVGMPN…FTEEEAIEEC (265 aa)). Position 30–35 (30–35 (NVGKST)) interacts with ATP. Residues serine 34 and threonine 55 each contribute to the Mg(2+) site. Methionine 233 provides a ligand contact to ATP. The TGS domain maps to 306-389 (NLINYFTCGE…ESGDIAHWKA (84 aa)).

This sequence belongs to the TRAFAC class OBG-HflX-like GTPase superfamily. OBG GTPase family. YchF/OLA1 subfamily. Monomer. It depends on Mg(2+) as a cofactor.

It is found in the cytoplasm. It localises to the nucleus. Its function is as follows. Hydrolyzes ATP, and can also hydrolyze GTP with lower efficiency. Has lower affinity for GTP. Negatively regulates the G2/M transition in the cell cycle. The protein is Obg-like ATPase 1 of Schizosaccharomyces pombe (strain 972 / ATCC 24843) (Fission yeast).